The following is a 291-amino-acid chain: Ribosomal RNA small subunit methyltransferase A (291 aa).

The S-adenosyl-L-methionine site is built by Asn-28, Leu-30, Gly-55, Glu-77, Asp-103, and Asn-123.

This sequence belongs to the class I-like SAM-binding methyltransferase superfamily. rRNA adenine N(6)-methyltransferase family. RsmA subfamily.

The protein resides in the cytoplasm. It catalyses the reaction adenosine(1518)/adenosine(1519) in 16S rRNA + 4 S-adenosyl-L-methionine = N(6)-dimethyladenosine(1518)/N(6)-dimethyladenosine(1519) in 16S rRNA + 4 S-adenosyl-L-homocysteine + 4 H(+). Its function is as follows. Specifically dimethylates two adjacent adenosines (A1518 and A1519) in the loop of a conserved hairpin near the 3'-end of 16S rRNA in the 30S particle. May play a critical role in biogenesis of 30S subunits. This chain is Ribosomal RNA small subunit methyltransferase A, found in Azorhizobium caulinodans (strain ATCC 43989 / DSM 5975 / JCM 20966 / LMG 6465 / NBRC 14845 / NCIMB 13405 / ORS 571).